The following is a 391-amino-acid chain: Elongation factor Tu (391 aa).

The region spanning 10–201 (KPHVNIGTIG…AVDDYIPTPE (192 aa)) is the tr-type G domain. The interval 19–26 (GHVDHGKT) is G1. GTP is bound at residue 19 to 26 (GHVDHGKT). Residue Thr26 participates in Mg(2+) binding. The G2 stretch occupies residues 55 to 59 (GITIS). The interval 76–79 (DCPG) is G3. GTP contacts are provided by residues 76–80 (DCPGH) and 131–134 (NKCD). The interval 131 to 134 (NKCD) is G4. Residues 169-171 (SAL) are G5.

Belongs to the TRAFAC class translation factor GTPase superfamily. Classic translation factor GTPase family. EF-Tu/EF-1A subfamily. As to quaternary structure, monomer.

It is found in the cytoplasm. The enzyme catalyses GTP + H2O = GDP + phosphate + H(+). In terms of biological role, GTP hydrolase that promotes the GTP-dependent binding of aminoacyl-tRNA to the A-site of ribosomes during protein biosynthesis. In Brucella anthropi (strain ATCC 49188 / DSM 6882 / CCUG 24695 / JCM 21032 / LMG 3331 / NBRC 15819 / NCTC 12168 / Alc 37) (Ochrobactrum anthropi), this protein is Elongation factor Tu.